The primary structure comprises 359 residues: DNA integrity scanning protein DisA (359 aa).

A DAC domain is found at 7 to 145; the sequence is DDIFRATLAA…AGRRYVLDGA (139 aa). Residues Gly74, Leu92, and 105-109 contribute to the ATP site; that span reads TRHRT.

Belongs to the DisA family. In terms of assembly, homooctamer. Requires Mg(2+) as cofactor.

It catalyses the reaction 2 ATP = 3',3'-c-di-AMP + 2 diphosphate. Functionally, participates in a DNA-damage check-point that is active prior to asymmetric division when DNA is damaged. DisA forms globular foci that rapidly scan along the chromosomes during sporulation, searching for lesions. When a lesion is present, DisA pauses at the lesion site. This triggers a cellular response that culminates in a temporary block in sporulation initiation. In terms of biological role, also has diadenylate cyclase activity, catalyzing the condensation of 2 ATP molecules into cyclic di-AMP (c-di-AMP). c-di-AMP acts as a signaling molecule that couples DNA integrity with progression of sporulation. The rise in c-di-AMP level generated by DisA while scanning the chromosome, operates as a positive signal that advances sporulation; upon encountering a lesion, the DisA focus arrests at the damaged site and halts c-di-AMP synthesis. In Parafrankia sp. (strain EAN1pec), this protein is DNA integrity scanning protein DisA.